The primary structure comprises 250 residues: Small ribosomal subunit protein uS3 (250 aa).

Positions 39 to 107 (VREFLTKNLK…PAQVSINEID (69 aa)) constitute a KH type-2 domain. The disordered stretch occupies residues 215-250 (MNPAPAEERPAKRGRGRGEGQERRGRRGDRAADKGE). Positions 220–250 (AEERPAKRGRGRGEGQERRGRRGDRAADKGE) are enriched in basic and acidic residues.

Belongs to the universal ribosomal protein uS3 family. As to quaternary structure, part of the 30S ribosomal subunit. Forms a tight complex with proteins S10 and S14.

Its function is as follows. Binds the lower part of the 30S subunit head. Binds mRNA in the 70S ribosome, positioning it for translation. The sequence is that of Small ribosomal subunit protein uS3 from Acinetobacter baumannii (strain AB0057).